Consider the following 561-residue polypeptide: Carboxylesterase 1F (561 aa).

Positions 1–17 are cleaved as a signal peptide; the sequence is MFLSTLFLVSLATCVIC. A disulfide bridge connects residues cysteine 87 and cysteine 116. Catalysis depends on serine 221, which acts as the Acyl-ester intermediate. Cysteine 273 and cysteine 284 are oxidised to a cystine. Residues glutamate 353 and histidine 466 each act as charge relay system in the active site. The Prevents secretion from ER signature appears at 558 to 561; it reads HNEL.

The protein belongs to the type-B carboxylesterase/lipase family. Expressed in liver, white and brown adipose tissue, kidney, intestine, adrenal, heart and ovary. Not detected in muscle, lung, testis, brain and spleen.

Its subcellular location is the lipid droplet. The protein localises to the cytoplasm. It is found in the cytosol. The protein resides in the endoplasmic reticulum. It localises to the microsome. The catalysed reaction is a carboxylic ester + H2O = an alcohol + a carboxylate + H(+). It carries out the reaction all-trans-retinyl hexadecanoate + H2O = all-trans-retinol + hexadecanoate + H(+). Functionally, involved in the detoxification of xenobiotics and in the activation of ester and amide prodrugs. Hydrolyzes retinyl esters. Hydrolyzes p-nitrophenyl butyrate (PNPB), triacylglycerol and monoacylglycerol. Shows higher activity against PNPB, a short-chain fatty acid ester, than against triolein, a long-chain fatty acid ester. Shows no detectable activity against diacylglycerol, cholesterol ester or phospholipids. May play a role in adipocyte lipolysis. This is Carboxylesterase 1F from Mus musculus (Mouse).